The sequence spans 195 residues: ATP-dependent Clp protease proteolytic subunit (195 aa).

The active-site Nucleophile is serine 97. Histidine 122 is a catalytic residue.

It belongs to the peptidase S14 family. Fourteen ClpP subunits assemble into 2 heptameric rings which stack back to back to give a disk-like structure with a central cavity, resembling the structure of eukaryotic proteasomes.

It is found in the cytoplasm. It catalyses the reaction Hydrolysis of proteins to small peptides in the presence of ATP and magnesium. alpha-casein is the usual test substrate. In the absence of ATP, only oligopeptides shorter than five residues are hydrolyzed (such as succinyl-Leu-Tyr-|-NHMec, and Leu-Tyr-Leu-|-Tyr-Trp, in which cleavage of the -Tyr-|-Leu- and -Tyr-|-Trp bonds also occurs).. In terms of biological role, cleaves peptides in various proteins in a process that requires ATP hydrolysis. Has a chymotrypsin-like activity. Plays a major role in the degradation of misfolded proteins. In Lactobacillus gasseri (strain ATCC 33323 / DSM 20243 / BCRC 14619 / CIP 102991 / JCM 1131 / KCTC 3163 / NCIMB 11718 / NCTC 13722 / AM63), this protein is ATP-dependent Clp protease proteolytic subunit.